Consider the following 475-residue polypeptide: Ribulose bisphosphate carboxylase large chain (475 aa).

A propeptide spanning residues 1-2 (MS) is cleaved from the precursor. The residue at position 3 (Pro-3) is an N-acetylproline. The residue at position 14 (Lys-14) is an N6,N6,N6-trimethyllysine. Substrate contacts are provided by Asn-123 and Thr-173. Residue Lys-175 is the Proton acceptor of the active site. Lys-177 contributes to the substrate binding site. The Mg(2+) site is built by Lys-201, Asp-203, and Glu-204. Lys-201 carries the post-translational modification N6-carboxylysine. The active-site Proton acceptor is the His-294. Residues Arg-295, His-327, and Ser-379 each contribute to the substrate site.

Belongs to the RuBisCO large chain family. Type I subfamily. In terms of assembly, heterohexadecamer of 8 large chains and 8 small chains; disulfide-linked. The disulfide link is formed within the large subunit homodimers. It depends on Mg(2+) as a cofactor. In terms of processing, the disulfide bond which can form in the large chain dimeric partners within the hexadecamer appears to be associated with oxidative stress and protein turnover.

It localises to the plastid. It is found in the chloroplast. The enzyme catalyses 2 (2R)-3-phosphoglycerate + 2 H(+) = D-ribulose 1,5-bisphosphate + CO2 + H2O. The catalysed reaction is D-ribulose 1,5-bisphosphate + O2 = 2-phosphoglycolate + (2R)-3-phosphoglycerate + 2 H(+). Its function is as follows. RuBisCO catalyzes two reactions: the carboxylation of D-ribulose 1,5-bisphosphate, the primary event in carbon dioxide fixation, as well as the oxidative fragmentation of the pentose substrate in the photorespiration process. Both reactions occur simultaneously and in competition at the same active site. The protein is Ribulose bisphosphate carboxylase large chain of Pinus koraiensis (Korean pine).